The chain runs to 184 residues: Der GTPase-activating protein YihI (184 aa).

The tract at residues 1–107 (MNRPVKGAAD…VVAAKPTMSP (107 aa)) is disordered. Residues 21-32 (TREELEREARER) show a composition bias toward basic and acidic residues. The segment covering 80–95 (SAVAKPKPKSKPSAPV) has biased composition (low complexity).

It belongs to the YihI family. Interacts with Der.

Its function is as follows. A GTPase-activating protein (GAP) that modifies Der/EngA GTPase function. May play a role in ribosome biogenesis. The sequence is that of Der GTPase-activating protein YihI from Pectobacterium carotovorum subsp. carotovorum (strain PC1).